The following is a 382-amino-acid chain: 4-hydroxy-3-methylbut-2-en-1-yl diphosphate synthase (flavodoxin) (382 aa).

4 residues coordinate [4Fe-4S] cluster: Cys290, Cys293, Cys327, and Glu334.

The protein belongs to the IspG family. [4Fe-4S] cluster is required as a cofactor.

The catalysed reaction is (2E)-4-hydroxy-3-methylbut-2-enyl diphosphate + oxidized [flavodoxin] + H2O + 2 H(+) = 2-C-methyl-D-erythritol 2,4-cyclic diphosphate + reduced [flavodoxin]. The protein operates within isoprenoid biosynthesis; isopentenyl diphosphate biosynthesis via DXP pathway; isopentenyl diphosphate from 1-deoxy-D-xylulose 5-phosphate: step 5/6. Converts 2C-methyl-D-erythritol 2,4-cyclodiphosphate (ME-2,4cPP) into 1-hydroxy-2-methyl-2-(E)-butenyl 4-diphosphate. In Rhodopirellula baltica (strain DSM 10527 / NCIMB 13988 / SH1), this protein is 4-hydroxy-3-methylbut-2-en-1-yl diphosphate synthase (flavodoxin).